Consider the following 457-residue polypeptide: Argininosuccinate lyase (457 aa).

Belongs to the lyase 1 family. Argininosuccinate lyase subfamily.

The protein resides in the cytoplasm. The enzyme catalyses 2-(N(omega)-L-arginino)succinate = fumarate + L-arginine. It participates in amino-acid biosynthesis; L-arginine biosynthesis; L-arginine from L-ornithine and carbamoyl phosphate: step 3/3. This chain is Argininosuccinate lyase, found in Pectobacterium carotovorum subsp. carotovorum (strain PC1).